The sequence spans 303 residues: Thioesterase poxG (303 aa).

It belongs to the lcsJ thioesterase family.

The protein operates within secondary metabolite biosynthesis. In terms of biological role, thioesterase; part of the gene cluster that mediates the biosynthesis of oxaleimides, cytotoxic compounds containing an unusual disubstituted succinimide moiety. The first step of the pathway is provided by the HR-PKS poxF that serves in a new mode of collaborative biosynthesis with the PKS-NRPS poxE, by providing the olefin containing amino acid substrate via the synthesis of an ACP-bound dec-4-enoate. The cytochrome P450 monooxygenase poxM-catalyzed oxidation at the alpha-position creates the enzyme-bound 2-hydroxydec-4-enoyl-ACP thioester, which may be prone to spontaneous hydrolysis to yield 2-hydroxydec-4-enoic acid due to increased electrophilicity of the carbonyl. 2-hydroxydec-4-enoic acid can then be further oxidized by poxM to yield the alpha-ketoacid 2-oxodec-4-enoicacid, which is reductively aminated by the aminotransferase poxL to yield (S,E)-2-aminodec-4-enoic acid. The Hybrid PKS-NRPS synthetase poxE then performs condensation between the octaketide product of its PKS modules and the amino group of (S,E)-2-aminodec-4-enoic acid which is activated and incorporated by the adenylation domain. The resulting aminoacyl product can be cyclized by the Diels-Alderase PoxQ and reductively released by the reductive (R) domain of poxE to yield an aldehyde intermediate. The released aldehyde is then substrate for a Knoevenagel condensation by the hydrolyase poxO followed by an oxidation at the 5-position of the pyrrolidone ring. The presence of the olefin from the amino acid building block allows for migration of the substituted allyl group to occur. This allylic transposition reaction takes place in a conjugate addition, semipinacol-like fashion to yield a succinimide intermediate. Iterative two-electron oxidations of the C7 methyl of the succinimide intermediate to the carboxylic acid can be catalyzed by one of two remaining cytochrome P450 monooxygenasess poxC or poxD to yield oxaleimide A. Subsequent oxidation yields the maleimide scaffold oxaleimide I. Both oxaleimide A and oxaleimide I can undergo oxidative modifications in the decalin ring to yield the series of products oxaleimides B to H. The polypeptide is Thioesterase poxG (Penicillium oxalicum (strain 114-2 / CGMCC 5302) (Penicillium decumbens)).